The sequence spans 257 residues: Diphthine synthase (257 aa).

S-adenosyl-L-methionine is bound by residues Leu9, Asp85, Val88, 113–114 (SI), Leu164, Ala209, and His234.

Belongs to the diphthine synthase family. As to quaternary structure, homodimer.

The enzyme catalyses 2-[(3S)-amino-3-carboxypropyl]-L-histidyl-[translation elongation factor 2] + 3 S-adenosyl-L-methionine = diphthine-[translation elongation factor 2] + 3 S-adenosyl-L-homocysteine + 3 H(+). It functions in the pathway protein modification; peptidyl-diphthamide biosynthesis. Functionally, S-adenosyl-L-methionine-dependent methyltransferase that catalyzes the trimethylation of the amino group of the modified target histidine residue in translation elongation factor 2 (EF-2), to form an intermediate called diphthine. The three successive methylation reactions represent the second step of diphthamide biosynthesis. The sequence is that of Diphthine synthase from Methanocaldococcus jannaschii (strain ATCC 43067 / DSM 2661 / JAL-1 / JCM 10045 / NBRC 100440) (Methanococcus jannaschii).